The chain runs to 325 residues: MVSAATRKSLLRARVMDFITSTAILPLLLGCVGLFSLFKLLQWLRMRAYVRNAVVVITGATSGLGRECARVFHAAGARLVLCGRNAEALEELSQELAASRAPGVQTHKPCTVTFDLADPGAIAGAASEILQCFGHVDVLINNAGISYRGAIVDTSPDVDKRVMETNYFGPVALTKALLPAMIRRRQGHVVAISSIQGKISLPFRSAYAASKHATQAFFDCLRAEVEQHDIEVTVISPGYIHTNLSLNAVTADGSKYGVMDETTAQGRSPVQVAQDILAALGKKKKDVVLADPMPSLAVYLRTLAPGLFFRLMASRARKERKSKHS.

At 1-17 (MVSAATRKSLLRARVMD) the chain is on the cytoplasmic side. The helical; Signal-anchor for type II membrane protein transmembrane segment at 18-38 (FITSTAILPLLLGCVGLFSLF) threads the bilayer. The Lumenal segment spans residues 39-325 (KLLQWLRMRA…ARKERKSKHS (287 aa)). Positions 62 and 64 each coordinate NAD(+). Ser194 contacts substrate. The NAD(+) site is built by Tyr207, Lys211, and Thr242. The Proton acceptor role is filled by Tyr207.

This sequence belongs to the short-chain dehydrogenases/reductases (SDR) family.

Its subcellular location is the endoplasmic reticulum membrane. Functionally, putative oxidoreductase. The chain is Dehydrogenase/reductase SDR family member 7B (DHRS7B) from Bos taurus (Bovine).